The following is a 301-amino-acid chain: Rhodopsin (301 aa).

Over 1–18 (LHMIHLHWYQYPPMNPMM) the chain is Extracellular. The helical transmembrane segment at 19-43 (YPLLLIFMLFTGILCLAGNFVTIWV) threads the bilayer. At 44 to 55 (FMNTKSLRTPAN) the chain is on the cytoplasmic side. A helical transmembrane segment spans residues 56 to 78 (LLVVNLAMSDFLMMFTMFPPMMV). The Extracellular portion of the chain corresponds to 79–92 (TCYYHTWTLGPTFC). Cysteine 92 and cysteine 169 are oxidised to a cystine. Residues 93 to 115 (QVYAFLGNLCGCASIWTMVFITF) traverse the membrane as a helical segment. The 'Ionic lock' involved in activated form stabilization motif lies at 116–118 (DRY). At 116-134 (DRYNVIVKGVAGEPLSTKK) the chain is on the cytoplasmic side. The helical transmembrane segment at 135–155 (ASLWILSVWVLSTAWCIAPFF) threads the bilayer. At 156–182 (GWNHYVPEGNLTGCGTDYLSEDILSRS) the chain is on the extracellular side. N-linked (GlcNAc...) asparagine glycosylation is present at asparagine 165. Residues 183-204 (YLYIYSTWVYFLPLAITIYCYV) form a helical membrane-spanning segment. The Cytoplasmic segment spans residues 205–245 (FIIKAVAAHEKGMRDQAKKMGIKSLRNEEAQKTSAECRLAK). The chain crosses the membrane as a helical span at residues 246-267 (NAMTTVALWFIAWTPCLLINWV). The Extracellular portion of the chain corresponds to 268–278 (GMFARSYLSPV). Residues 279–300 (YTIWGYVFAKANAVYNPIVYAI) traverse the membrane as a helical segment. The residue at position 288 (lysine 288) is an N6-(retinylidene)lysine.

The protein belongs to the G-protein coupled receptor 1 family. Opsin subfamily. Homodimer. Interacts with GNAQ. Post-translationally, contains one covalently linked retinal chromophore.

The protein localises to the cell projection. The protein resides in the rhabdomere membrane. Photoreceptor required for image-forming vision at low light intensity. Can use both retinal and 3-dehydroretinal as visual pigment. Light-induced isomerization of 11-cis to all-trans retinal triggers a conformational change that activates signaling via G-proteins. Signaling via GNAQ probably mediates the activation of phospholipase C. This Cambarus hubrichti (Salem cave crayfish) protein is Rhodopsin (RHO).